The following is a 292-amino-acid chain: NAD kinase (292 aa).

The Proton acceptor role is filled by Asp-73. NAD(+) contacts are provided by residues 73 to 74, 147 to 148, His-158, Arg-175, Asp-177, 188 to 193, and Gln-247; these read DG, NE, and TAYSLS.

The protein belongs to the NAD kinase family. Requires a divalent metal cation as cofactor.

Its subcellular location is the cytoplasm. The catalysed reaction is NAD(+) + ATP = ADP + NADP(+) + H(+). Functionally, involved in the regulation of the intracellular balance of NAD and NADP, and is a key enzyme in the biosynthesis of NADP. Catalyzes specifically the phosphorylation on 2'-hydroxyl of the adenosine moiety of NAD to yield NADP. The sequence is that of NAD kinase from Escherichia coli O7:K1 (strain IAI39 / ExPEC).